Here is a 322-residue protein sequence, read N- to C-terminus: MSKDYRVLLYYYYTTIEDPEGFAKEHLAFCKSLQLKGRVLVAKEGINGTVSGLKEHTDAYMEAMKANPLFEGIVFKVDEEEQHVFKKMHVRPRPELVTLRLNEDDVNPNELTGKHLSPKEWREAMLAEDTVVIDARNDYEYDVGHFRGAIRPDIKAFRELPDWIRQNKEQFENKRILTYCTGGIRCEKFSGWLKKEGFEDVAQLDGGIVTYGKDPEVKGELWDGKCYVFDERLTVPINHVAPTVVGKDYFDGKPCERYVNCANPECNKQILCSEENEHKYLRGCTPECRVHPRNLYVKEHQLSPEEHQARLDALGEKLPARL.

Positions Leu126–Glu220 constitute a Rhodanese domain. Cys180 serves as the catalytic Cysteine persulfide intermediate.

The protein belongs to the TrhO family.

It carries out the reaction uridine(34) in tRNA + AH2 + O2 = 5-hydroxyuridine(34) in tRNA + A + H2O. Catalyzes oxygen-dependent 5-hydroxyuridine (ho5U) modification at position 34 in tRNAs. This Shouchella clausii (strain KSM-K16) (Alkalihalobacillus clausii) protein is tRNA uridine(34) hydroxylase.